An 820-amino-acid chain; its full sequence is Serine/threonine-protein phosphatase 4 regulatory subunit 3-B (820 aa).

Residues 1-100 enclose the WH1 domain; the sequence is MSDTRRRVKV…DEIWEKICQV (100 aa). The span at 682–694 shows a compositional bias: acidic residues; the sequence is ELWFNEDDEEEGE. 2 disordered regions span residues 682 to 711 and 750 to 820; these read ELWF…DFPE and AANG…RLGS. Residues 701–711 are compositionally biased toward basic and acidic residues; sequence EKTKPEDDFPE. 2 stretches are compositionally biased toward polar residues: residues 750-761 and 768-790; these read AANGANSTNSKS and PATS…STKG. Acidic residues predominate over residues 798–809; sequence YPDDEDEEEEED.

It belongs to the SMEK family. Serine/threonine-protein phosphatase 4 (PP4) occurs in different assemblies of the catalytic and one or more regulatory subunits.

Functionally, regulatory subunit of serine/threonine-protein phosphatase 4 (PP4). The chain is Serine/threonine-protein phosphatase 4 regulatory subunit 3-B from Xenopus laevis (African clawed frog).